The primary structure comprises 338 residues: Ketol-acid reductoisomerase (NADP(+)) (338 aa).

The region spanning 1–181 (MRVFYDKDCD…GGGRTGIIET (181 aa)) is the KARI N-terminal Rossmann domain. NADP(+) is bound by residues 24 to 27 (YGSQ), Arg47, Ser50, Thr52, and 82 to 85 (DEFQ). His107 is a catalytic residue. Residue Gly133 participates in NADP(+) binding. Residues 182-327 (TFKDETETDL…EKLRAMMPWI (146 aa)) form the KARI C-terminal knotted domain. Positions 190, 194, 226, and 230 each coordinate Mg(2+). Ser251 is a binding site for substrate.

This sequence belongs to the ketol-acid reductoisomerase family. Mg(2+) serves as cofactor.

The catalysed reaction is (2R)-2,3-dihydroxy-3-methylbutanoate + NADP(+) = (2S)-2-acetolactate + NADPH + H(+). It catalyses the reaction (2R,3R)-2,3-dihydroxy-3-methylpentanoate + NADP(+) = (S)-2-ethyl-2-hydroxy-3-oxobutanoate + NADPH + H(+). Its pathway is amino-acid biosynthesis; L-isoleucine biosynthesis; L-isoleucine from 2-oxobutanoate: step 2/4. It participates in amino-acid biosynthesis; L-valine biosynthesis; L-valine from pyruvate: step 2/4. In terms of biological role, involved in the biosynthesis of branched-chain amino acids (BCAA). Catalyzes an alkyl-migration followed by a ketol-acid reduction of (S)-2-acetolactate (S2AL) to yield (R)-2,3-dihydroxy-isovalerate. In the isomerase reaction, S2AL is rearranged via a Mg-dependent methyl migration to produce 3-hydroxy-3-methyl-2-ketobutyrate (HMKB). In the reductase reaction, this 2-ketoacid undergoes a metal-dependent reduction by NADPH to yield (R)-2,3-dihydroxy-isovalerate. The sequence is that of Ketol-acid reductoisomerase (NADP(+)) from Pseudomonas paraeruginosa (strain DSM 24068 / PA7) (Pseudomonas aeruginosa (strain PA7)).